A 468-amino-acid polypeptide reads, in one-letter code: Acyltransferase R4 (468 aa).

7 consecutive transmembrane segments (helical) span residues 21–41, 70–90, 133–153, 252–272, 308–328, 388–408, and 423–443; these read GILSIIIFNAHLTPIIILGYD, LFTIPIVKLVYSASPAVCLFF, LNLLAMASMIVPFVLVKTGFF, FLAALVVMGIAVGSLECPLFW, DPFGKAVVLAIGCYFASYPTW, FAVYLVHFCLVISFGPGLFSW, and IGFGIAYAVLFIGVLLAAAMF.

It belongs to the acyltransferase 3 family.

It is found in the membrane. Its pathway is secondary metabolite biosynthesis. Functionally, acyltransferase; part of the gene cluster that mediates the biosynthesis of squalestatin S1 (SQS1, also known as zaragozic acid A), a heavily oxidized fungal polyketide that offers potent cholesterol lowering activity by targeting squalene synthase (SS). SQS1 is composed of a 2,8-dioxobicyclic[3.2.1]octane-3,4,5-tricarboxyclic acid core that is connected to two lipophilic polyketide arms. These initial steps feature the priming of an unusual benzoic acid starter unit onto the highly reducing polyketide synthase pks2, followed by oxaloacetate extension and product release to generate a tricarboxylic acid containing product. The phenylalanine ammonia lyase (PAL) M7 and the acyl-CoA ligase M9 are involved in transforming phenylalanine into benzoyl-CoA. The citrate synthase-like protein R3 is involved in connecting the C-alpha-carbons of the hexaketide chain and oxaloacetate to afford the tricarboxylic acid unit. The potential hydrolytic enzymes, M8 and M10, are in close proximity to pks2 and may participate in product release. On the other side, the tetraketide arm is synthesized by a the squalestatin tetraketide synthase pks1 and enzymatically esterified to the core in the last biosynthetic step, by the acetyltransferase M4. The biosynthesis of the tetraketide must involve 3 rounds of chain extension. After the first and second rounds methyl-transfer occurs, and in all rounds of extension the ketoreductase and dehydratase are active. The enoyl reductase and C-MeT of pks1 are not active in the final round of extension. The acetyltransferase M4 appears to have a broad substrate selectivity for its acyl CoA substrate, allowing the in vitro synthesis of novel squalestatins. The biosynthesis of SQS1 requires several oxidative steps likely performed by oxidoreductases M1, R1 and R2. Finally, in support of the identification of the cluster as being responsible for SQS1 production, the cluster contains a gene encoding a putative squalene synthase (SS) R6, suggesting a likely mechanism for self-resistance. This chain is Acyltransferase R4, found in Phoma sp. (strain ATCC 20986 / MF5453).